A 315-amino-acid polypeptide reads, in one-letter code: Transposase for insertion sequence element IS640 (315 aa).

An HTH IS21-type domain is found at Glu5–Leu66. The 175-residue stretch at Phe111–Arg285 folds into the Integrase catalytic domain.

This sequence belongs to the transposase IS21/IS408/IS1162 family.

Functionally, involved in the transposition of the insertion sequence. The chain is Transposase for insertion sequence element IS640 (istA) from Shigella sonnei.